A 1149-amino-acid polypeptide reads, in one-letter code: FH2 domain-containing protein 1 (1149 aa).

Disordered regions lie at residues 18–79, 464–540, 554–660, and 681–1149; these read LATA…PPPG, NHDR…SRLS, ESAT…PLLP, and SPKS…PLQK. Pro residues-rich tracts occupy residues 33–48 and 56–79; these read ASPP…PPCP and PSPP…PPPG. The FH2 domain maps to 88 to 483; the sequence is GYSSLGKKKR…QLQRQKEMEQ (396 aa). Basic and acidic residues predominate over residues 464–485; that stretch reads NHDREEQERKQLQRQKEMEQKR. Residues 486-504 are compositionally biased toward polar residues; it reads YSWSTGELGSFGRSSSEND. Ser-501 is modified (phosphoserine). A compositionally biased stretch (low complexity) spans 522–532; the sequence is PRPNSPSYRPP. Composition is skewed to polar residues over residues 554-575 and 591-604; these read ESAT…SSPR and SHGP…QASK. Ser-645 and Ser-655 each carry phosphoserine. Positions 681-693 are enriched in polar residues; the sequence is SPKSLEEGSQLTL. Positions 784–795 are enriched in basic and acidic residues; that stretch reads MDSRAGGDKQEE. Low complexity predominate over residues 801 to 822; sequence GSVSSGAGEAGSSQVSSNSVSS. Residues 844–856 are compositionally biased toward basic and acidic residues; that stretch reads PKDRPSRGKDAIA. A compositionally biased stretch (polar residues) spans 926 to 947; it reads ETPSSTDTPLSRRSSVRGTSDT. The tract at residues 960-1086 is MTBD; microtubule-binding domain; that stretch reads EEPRLPRSSG…VKGGSEDSAS (127 aa). A compositionally biased stretch (low complexity) spans 965–974; it reads PRSSGSISGR. 2 stretches are compositionally biased toward polar residues: residues 1042–1052 and 1064–1074; these read ARNTVASSSRS and TGLTRTVSQRQ. The span at 1123–1134 shows a compositional bias: basic and acidic residues; the sequence is GTTERSSLRLKD.

As to quaternary structure, interacts with CEP170. In terms of tissue distribution, brain, heart and lung (at protein level).

Its subcellular location is the golgi apparatus. The protein resides in the cell projection. It is found in the cilium. Functionally, microtubule-associated formin which regulates both actin and microtubule dynamics. Induces microtubule acetylation and stabilization and actin stress fiber formation. Regulates Golgi ribbon formation. Required for normal cilia assembly. Early in cilia assembly, may assist in the maturation and positioning of the centrosome/basal body, and once cilia assembly has initiated, may also promote cilia elongation by inhibiting disassembly. The sequence is that of FH2 domain-containing protein 1 (Fhdc1) from Mus musculus (Mouse).